Consider the following 631-residue polypeptide: Alpha-dioxygenase 2 (631 aa).

Residues 1-20 form the signal peptide; the sequence is MGFSPSSSWFLHPQLHHVVS. His157 is a heme b binding site. Tyr378 acts as the Proton acceptor in catalysis. His381 contacts heme b. The N-linked (GlcNAc...) asparagine glycan is linked to Asn583.

Belongs to the peroxidase family. It depends on heme b as a cofactor. As to expression, expressed in seedlings (cotyledons, young leaves, and hypocotyls), flowers, siliques and old leaves.

Alpha-dioxygenase that catalyzes the primary oxygenation of fatty acids into oxylipins. May be involved in the senescence process. In Arabidopsis thaliana (Mouse-ear cress), this protein is Alpha-dioxygenase 2 (DOX2).